Consider the following 417-residue polypeptide: Phosphoglycerate kinase (417 aa).

Residues 24-26 (DLN), Arg44, 67-70 (HLGR), Arg126, and Arg170 contribute to the substrate site. ATP is bound by residues Lys220, Gly316, Glu347, and 373–376 (GGDS).

The protein belongs to the phosphoglycerate kinase family. Monomer.

Its subcellular location is the cytoplasm. It catalyses the reaction (2R)-3-phosphoglycerate + ATP = (2R)-3-phospho-glyceroyl phosphate + ADP. It functions in the pathway carbohydrate degradation; glycolysis; pyruvate from D-glyceraldehyde 3-phosphate: step 2/5. The sequence is that of Phosphoglycerate kinase from Renibacterium salmoninarum (strain ATCC 33209 / DSM 20767 / JCM 11484 / NBRC 15589 / NCIMB 2235).